Here is a 47-residue protein sequence, read N- to C-terminus: Rhodotorucin-A peptides type 3 (47 aa).

Residues 1–3 (MVA) constitute a propeptide that is removed on maturation. A lipid anchor (S-farnesyl cysteine) is attached at Cys-14. The propeptide occupies 15-18 (TVAK). The S-farnesyl cysteine moiety is linked to residue Cys-29. Positions 30–33 (TVSK) are excised as a propeptide. Residue Cys-44 is the site of S-farnesyl cysteine attachment. Residues 45 to 47 (TVA) constitute a propeptide that is removed on maturation.

The protein resides in the cell membrane. Its function is as follows. Rhodotorucin-A is a mating pheromone in cells of mating type A of Rhodosporidium toruloides. The sequence is that of Rhodotorucin-A peptides type 3 (RHA3) from Rhodotorula toruloides (Yeast).